Here is a 147-residue protein sequence, read N- to C-terminus: Ubiquitin-conjugating enzyme E2 D3 (147 aa).

Residues Met1–Met147 enclose the UBC core domain. Cys21 and Cys107 are oxidised to a cystine. Cys85 functions as the Glycyl thioester intermediate in the catalytic mechanism.

The protein belongs to the ubiquitin-conjugating enzyme family. In terms of assembly, interacts with SCF (SKP1-CUL1-F-box protein) E3 ubiquitin ligase complex; when Cullin is neddylated, the interaction between the E2 and the SCF complex is strengthened. Interacts with DAPK3. Interacts with BRCA1; the DNA damage checkpoint promotes the association with BRCA1 after ionizing radiation. Interacts non-covalently with ubiquitin. Interacts with E3 ubiquitin-protein ligase CBLC. Interacts with UBTD1. Interacts with RIGI and RNF135; involved in RIGI ubiquitination and activation. In terms of processing, phosphorylated by AURKB.

It localises to the cell membrane. It is found in the endosome membrane. The catalysed reaction is S-ubiquitinyl-[E1 ubiquitin-activating enzyme]-L-cysteine + [E2 ubiquitin-conjugating enzyme]-L-cysteine = [E1 ubiquitin-activating enzyme]-L-cysteine + S-ubiquitinyl-[E2 ubiquitin-conjugating enzyme]-L-cysteine.. It carries out the reaction S-ubiquitinyl-[E1 ubiquitin-activating enzyme]-L-cysteine + [acceptor protein]-L-lysine = [E1 ubiquitin-activating enzyme]-L-cysteine + N(6)-monoubiquitinyl-[acceptor protein]-L-lysine.. The protein operates within protein modification; protein ubiquitination. Functionally, accepts ubiquitin from the E1 complex and catalyzes its covalent attachment to other proteins. In vitro catalyzes 'Lys-11'-, as well as 'Lys-48'-linked polyubiquitination. Cooperates with the E2 CDC34 and the SCF(FBXW11) E3 ligase complex for the polyubiquitination of NFKBIA leading to its subsequent proteasomal degradation. Acts as an initiator E2, priming the phosphorylated NFKBIA target at positions 'Lys-21' and/or 'Lys-22' with a monoubiquitin. Ubiquitin chain elongation is then performed by CDC34, building ubiquitin chains from the UBE2D3-primed NFKBIA-linked ubiquitin. Also acts as an initiator E2, in conjunction with RNF8, for the priming of PCNA. Monoubiquitination of PCNA, and its subsequent polyubiquitination, are essential events in the operation of the DNA damage tolerance (DDT) pathway that is activated after DNA damage caused by UV or chemical agents during S-phase. Associates with the BRCA1/BARD1 E3 ligase complex to perform ubiquitination at DNA damage sites following ionizing radiation leading to DNA repair. Targets DAPK3 for ubiquitination which influences promyelocytic leukemia protein nuclear body (PML-NB) formation in the nucleus. In conjunction with the MDM2 and TOPORS E3 ligases, functions ubiquitination of p53/TP53. In conjunction with the CBL E3 ligase, targets EGFR for polyubiquitination at the plasma membrane as well as during its internalization and transport on endosomes. In conjunction with the STUB1 E3 quality control E3 ligase, ubiquitinates unfolded proteins to catalyze their immediate destruction. Together with RNF135, catalyzes the viral RNA-dependent 'Lys-63'-linked polyubiquitination of RIGI to activate the downstream signaling pathway that leads to interferon beta production. Together with ZNF598, catalyzes ubiquitination of 40S ribosomal proteins in response to ribosome collisions. In cooperation with the GATOR2 complex, catalyzes 'Lys-6'-linked ubiquitination of NPRL2. This is Ubiquitin-conjugating enzyme E2 D3 (UBE2D3) from Bos taurus (Bovine).